A 242-amino-acid chain; its full sequence is Biosynthetic peptidoglycan transglycosylase (242 aa).

A helical membrane pass occupies residues 19–39; that stretch reads LMVVLAVFWGGGIALFSVAPV.

It belongs to the glycosyltransferase 51 family.

The protein localises to the cell inner membrane. The catalysed reaction is [GlcNAc-(1-&gt;4)-Mur2Ac(oyl-L-Ala-gamma-D-Glu-L-Lys-D-Ala-D-Ala)](n)-di-trans,octa-cis-undecaprenyl diphosphate + beta-D-GlcNAc-(1-&gt;4)-Mur2Ac(oyl-L-Ala-gamma-D-Glu-L-Lys-D-Ala-D-Ala)-di-trans,octa-cis-undecaprenyl diphosphate = [GlcNAc-(1-&gt;4)-Mur2Ac(oyl-L-Ala-gamma-D-Glu-L-Lys-D-Ala-D-Ala)](n+1)-di-trans,octa-cis-undecaprenyl diphosphate + di-trans,octa-cis-undecaprenyl diphosphate + H(+). Its pathway is cell wall biogenesis; peptidoglycan biosynthesis. Peptidoglycan polymerase that catalyzes glycan chain elongation from lipid-linked precursors. The sequence is that of Biosynthetic peptidoglycan transglycosylase from Shigella dysenteriae serotype 1 (strain Sd197).